The sequence spans 213 residues: ATP-dependent Clp protease proteolytic subunit (213 aa).

Catalysis depends on S114, which acts as the Nucleophile. H139 is an active-site residue.

This sequence belongs to the peptidase S14 family. As to quaternary structure, fourteen ClpP subunits assemble into 2 heptameric rings which stack back to back to give a disk-like structure with a central cavity, resembling the structure of eukaryotic proteasomes.

It is found in the cytoplasm. The enzyme catalyses Hydrolysis of proteins to small peptides in the presence of ATP and magnesium. alpha-casein is the usual test substrate. In the absence of ATP, only oligopeptides shorter than five residues are hydrolyzed (such as succinyl-Leu-Tyr-|-NHMec, and Leu-Tyr-Leu-|-Tyr-Trp, in which cleavage of the -Tyr-|-Leu- and -Tyr-|-Trp bonds also occurs).. Functionally, cleaves peptides in various proteins in a process that requires ATP hydrolysis. Has a chymotrypsin-like activity. Plays a major role in the degradation of misfolded proteins. In Pseudomonas entomophila (strain L48), this protein is ATP-dependent Clp protease proteolytic subunit.